The sequence spans 172 residues: 6,7-dimethyl-8-ribityllumazine synthase (172 aa).

Residues Phe-22 and 56–58 (AFE) contribute to the 5-amino-6-(D-ribitylamino)uracil site. Residue 78–79 (LG) participates in (2S)-2-hydroxy-3-oxobutyl phosphate binding. Residue 80–82 (AII) coordinates 5-amino-6-(D-ribitylamino)uracil. Residue His-88 is the Proton donor of the active site. Phe-113 serves as a coordination point for 5-amino-6-(D-ribitylamino)uracil. Arg-127 is a (2S)-2-hydroxy-3-oxobutyl phosphate binding site.

Belongs to the DMRL synthase family.

The enzyme catalyses (2S)-2-hydroxy-3-oxobutyl phosphate + 5-amino-6-(D-ribitylamino)uracil = 6,7-dimethyl-8-(1-D-ribityl)lumazine + phosphate + 2 H2O + H(+). It functions in the pathway cofactor biosynthesis; riboflavin biosynthesis; riboflavin from 2-hydroxy-3-oxobutyl phosphate and 5-amino-6-(D-ribitylamino)uracil: step 1/2. Its function is as follows. Catalyzes the formation of 6,7-dimethyl-8-ribityllumazine by condensation of 5-amino-6-(D-ribitylamino)uracil with 3,4-dihydroxy-2-butanone 4-phosphate. This is the penultimate step in the biosynthesis of riboflavin. The protein is 6,7-dimethyl-8-ribityllumazine synthase of Protochlamydia amoebophila (strain UWE25).